Consider the following 200-residue polypeptide: Recombination protein RecR (200 aa).

The C4-type zinc-finger motif lies at C59–C74. Positions S82 to P177 constitute a Toprim domain.

This sequence belongs to the RecR family.

In terms of biological role, may play a role in DNA repair. It seems to be involved in an RecBC-independent recombinational process of DNA repair. It may act with RecF and RecO. The protein is Recombination protein RecR of Bifidobacterium longum subsp. infantis (strain ATCC 15697 / DSM 20088 / JCM 1222 / NCTC 11817 / S12).